The chain runs to 576 residues: G protein-coupled receptor kinase 6 (576 aa).

The segment at 1-185 is N-terminal; the sequence is MELENIVANT…LERQPVTKNT (185 aa). One can recognise an RGS domain in the interval 53-171; the sequence is YHSLCERQPI…LDSIYFNRFL (119 aa). Positions 186–448 constitute a Protein kinase domain; sequence FRQYRVLGKG…AREVKEHPLF (263 aa). ATP contacts are provided by residues 192-200, Lys215, and 264-270; these read LGKGGFGEV and TLMNGGD. Asp311 serves as the catalytic Proton acceptor. Position 315 to 318 (315 to 318) interacts with ATP; sequence ENIL. An AGC-kinase C-terminal domain is found at 449–514; sequence KKLNFKRLGA…GSVSIPWQNE (66 aa). Ser484 carries the post-translational modification Phosphoserine; by autocatalysis. Thr485 carries the post-translational modification Phosphothreonine; by autocatalysis. 3 S-palmitoyl cysteine lipidation sites follow: Cys561, Cys562, and Cys565. Residues Ser566 and Ser568 each carry the phosphoserine modification.

It belongs to the protein kinase superfamily. AGC Ser/Thr protein kinase family. GPRK subfamily. As to quaternary structure, interacts with GIT1. As to expression, widely expressed. Detectable in all brain areas examined.

It is found in the membrane. The catalysed reaction is [G-protein-coupled receptor] + ATP = [G-protein-coupled receptor]-phosphate + ADP + H(+). Its function is as follows. Specifically phosphorylates the activated forms of G protein-coupled receptors. Such receptor phosphorylation initiates beta-arrestin-mediated receptor desensitization, internalization, and signaling events leading to their desensitization. Seems to be involved in the desensitization of D2-like dopamine receptors in striatum and chemokine receptor CXCR4 which is critical for CXCL12-induced cell chemotaxis. Phosphorylates rhodopsin (RHO) (in vitro) and a non G-protein-coupled receptor: LRP6 during Wnt signaling (in vitro). The protein is G protein-coupled receptor kinase 6 (Grk6) of Rattus norvegicus (Rat).